The chain runs to 236 residues: Homeobox protein notochord (236 aa).

Positions 138 to 197 (MKRIRTVFTPEQLEKLEKEFLKQQYMVGTERVDLASTLNLTETQVKVWFQNRRIKWRKQS) form a DNA-binding region, homeobox. Residues 209 to 236 (GVIPADSSDHTDDSRETEEDEDDLDVEL) are disordered. The segment covering 223–236 (RETEEDEDDLDVEL) has biased composition (acidic residues).

As to expression, expressed throughout the embryo during pre-gastrula stages. Localized to the dorsal lip of the blastopore (Spemann organizer) during early gastrulation, after which expression continues in tissues derived from the organizer. Expressed in the notochord during mid-gastrulation. During neurulation, expressed in the notochord, archenteron roof and the prospective floor plate. Also expressed in the region that will become the epiphysis, the pineal body precursor. By the early tailbud stages, expression is limited to posterior notochord and floor plate before becoming restricted to the tip of the tail in the tadpole.

It is found in the nucleus. Its function is as follows. Transcriptional repressor. Plays a fundamental role in notochord formation, acting within the mesodermal region. This is Homeobox protein notochord (noto) from Xenopus laevis (African clawed frog).